We begin with the raw amino-acid sequence, 59 residues long: Large ribosomal subunit protein bL32 (59 aa).

A compositionally biased stretch (basic residues) spans 1-19; it reads MPVPKRRMSRSNTRSRRAQ. Positions 1–20 are disordered; sequence MPVPKRRMSRSNTRSRRAQW.

This sequence belongs to the bacterial ribosomal protein bL32 family.

The protein is Large ribosomal subunit protein bL32 of Acidothermus cellulolyticus (strain ATCC 43068 / DSM 8971 / 11B).